The following is a 214-amino-acid chain: Reticulon-3-B (214 aa).

Residues 1-22 (MAETSGPQSSHISSSSAGDKGS) form a disordered region. Residues 26-214 (VRDLLYWRDV…LPGALKKKSE (189 aa)) enclose the Reticulon domain. Helical transmembrane passes span 46–66 (MVLL…YLVL) and 150–170 (TYIG…LLAF).

Homodimer.

Its subcellular location is the endoplasmic reticulum membrane. The protein resides in the golgi apparatus membrane. In terms of biological role, may be involved in membrane trafficking in the early secretory pathway. The sequence is that of Reticulon-3-B (rtn3-b) from Xenopus laevis (African clawed frog).